A 307-amino-acid chain; its full sequence is Streptomycin 6-kinase (307 aa).

Streptomycin is bound at residue 133–145 (LAGLLNRLHSVPA). Aspartate 201 serves as the catalytic Proton acceptor.

This sequence belongs to the aminoglycoside phosphotransferase family.

The catalysed reaction is streptomycin + ATP = streptomycin 6-phosphate + ADP + H(+). The aminoglycoside phosphotransferases achieve inactivation of their antibiotic substrates by phosphorylation. The chain is Streptomycin 6-kinase (aphD) from Streptomyces griseus.